Here is a 68-residue protein sequence, read N- to C-terminus: Protein transport protein Sec61 gamma-2 subunit (68 aa).

The Cytoplasmic segment spans residues 1 to 32 (MDKVVKFAEPGRAFAKDSIRLVKRCTKPDRKE). The helical transmembrane segment at 33–61 (FQKIAIATAVGFCIMGFIGFFVKLIHIPI) threads the bilayer. The Extracellular portion of the chain corresponds to 62 to 68 (NNIIVGS).

Belongs to the SecE/SEC61-gamma family. In terms of assembly, heterotrimeric complex composed of SEC61-alpha, SEC61-beta and SEC61-gamma.

It localises to the endoplasmic reticulum membrane. Functionally, necessary for protein translocation in the endoplasmic reticulum. The polypeptide is Protein transport protein Sec61 gamma-2 subunit (Sec61gamma) (Drosophila melanogaster (Fruit fly)).